The primary structure comprises 333 residues: Ornithine carbamoyltransferase (333 aa).

Carbamoyl phosphate-binding positions include 56–59 (STRT), glutamine 83, arginine 107, and 134–137 (HPTQ). Residues asparagine 167, aspartate 231, and 235-236 (SM) contribute to the L-ornithine site. Residues 273-274 (CL) and arginine 318 each bind carbamoyl phosphate.

This sequence belongs to the aspartate/ornithine carbamoyltransferase superfamily. OTCase family.

Its subcellular location is the cytoplasm. It carries out the reaction carbamoyl phosphate + L-ornithine = L-citrulline + phosphate + H(+). The protein operates within amino-acid biosynthesis; L-arginine biosynthesis; L-arginine from L-ornithine and carbamoyl phosphate: step 1/3. Functionally, reversibly catalyzes the transfer of the carbamoyl group from carbamoyl phosphate (CP) to the N(epsilon) atom of ornithine (ORN) to produce L-citrulline. The polypeptide is Ornithine carbamoyltransferase (Staphylococcus aureus (strain MSSA476)).